A 683-amino-acid chain; its full sequence is Methionine--tRNA ligase (683 aa).

Positions 15 to 25 match the 'HIGH' region motif; sequence PYANGPIHLGH. The Zn(2+) site is built by Cys146, Cys149, Cys159, and Cys162. The 'KMSKS' region signature appears at 332-336; sequence KMSKS. ATP is bound at residue Lys335. In terms of domain architecture, tRNA-binding spans 582 to 683; that stretch reads DFAKIDLRIA…EGALPGMRVK (102 aa).

The protein belongs to the class-I aminoacyl-tRNA synthetase family. MetG type 1 subfamily. In terms of assembly, homodimer. The cofactor is Zn(2+).

The protein resides in the cytoplasm. It catalyses the reaction tRNA(Met) + L-methionine + ATP = L-methionyl-tRNA(Met) + AMP + diphosphate. In terms of biological role, is required not only for elongation of protein synthesis but also for the initiation of all mRNA translation through initiator tRNA(fMet) aminoacylation. This chain is Methionine--tRNA ligase, found in Shewanella frigidimarina (strain NCIMB 400).